The primary structure comprises 122 residues: Large ribosomal subunit protein bL12 (122 aa).

Belongs to the bacterial ribosomal protein bL12 family. As to quaternary structure, homodimer. Part of the ribosomal stalk of the 50S ribosomal subunit. Forms a multimeric L10(L12)X complex, where L10 forms an elongated spine to which 2 to 4 L12 dimers bind in a sequential fashion. Binds GTP-bound translation factors.

Functionally, forms part of the ribosomal stalk which helps the ribosome interact with GTP-bound translation factors. Is thus essential for accurate translation. The protein is Large ribosomal subunit protein bL12 of Acinetobacter baumannii (strain AB0057).